Reading from the N-terminus, the 552-residue chain is Probable protein kinase UbiB (552 aa).

Residues 121-504 (HFDTVPLASA…QGLQRRVVNA (384 aa)) form the Protein kinase domain. Residues 127–135 (LASASISQV) and Lys149 contribute to the ATP site. The active-site Proton acceptor is Asp284. The next 2 membrane-spanning stretches (helical) occupy residues 501–521 (VVNA…YGLH) and 526–546 (YLGA…LALF).

This sequence belongs to the ABC1 family. UbiB subfamily.

It localises to the cell inner membrane. It functions in the pathway cofactor biosynthesis; ubiquinone biosynthesis [regulation]. Functionally, is probably a protein kinase regulator of UbiI activity which is involved in aerobic coenzyme Q (ubiquinone) biosynthesis. This is Probable protein kinase UbiB from Xylella fastidiosa (strain 9a5c).